We begin with the raw amino-acid sequence, 100 residues long: Protein translation factor SUI1 homolog (100 aa).

It belongs to the SUI1 family.

This chain is Protein translation factor SUI1 homolog, found in Sulfurisphaera tokodaii (strain DSM 16993 / JCM 10545 / NBRC 100140 / 7) (Sulfolobus tokodaii).